A 316-amino-acid chain; its full sequence is Beta-ketoacyl-[acyl-carrier-protein] synthase III 1 (316 aa).

Catalysis depends on residues C112 and H243. The segment at 244–248 (QANYR) is ACP-binding. N273 is a catalytic residue.

This sequence belongs to the thiolase-like superfamily. FabH family. In terms of assembly, homodimer.

It localises to the cytoplasm. It carries out the reaction malonyl-[ACP] + acetyl-CoA + H(+) = 3-oxobutanoyl-[ACP] + CO2 + CoA. It participates in lipid metabolism; fatty acid biosynthesis. Functionally, catalyzes the condensation reaction of fatty acid synthesis by the addition to an acyl acceptor of two carbons from malonyl-ACP. Catalyzes the first condensation reaction which initiates fatty acid synthesis and may therefore play a role in governing the total rate of fatty acid production. Possesses both acetoacetyl-ACP synthase and acetyl transacylase activities. Its substrate specificity determines the biosynthesis of branched-chain and/or straight-chain of fatty acids. In Vibrio cholerae serotype O1 (strain ATCC 39315 / El Tor Inaba N16961), this protein is Beta-ketoacyl-[acyl-carrier-protein] synthase III 1.